We begin with the raw amino-acid sequence, 199 residues long: 5'-deoxynucleotidase YfbR (199 aa).

Substrate contacts are provided by residues 18–19 (RW) and His-33. Residues 30–142 (VSEHSLQVAM…VKQADALCAY (113 aa)) enclose the HD domain. Positions 33, 68, and 69 each coordinate a divalent metal cation. Substrate-binding positions include Asp-69, 77–80 (DLPT), and Asp-137. Residue Asp-137 participates in a divalent metal cation binding.

The protein belongs to the 5DNU family. As to quaternary structure, homodimer. A divalent metal cation is required as a cofactor.

The protein localises to the cytoplasm. The catalysed reaction is a 2'-deoxyribonucleoside 5'-phosphate + H2O = a 2'-deoxyribonucleoside + phosphate. Its function is as follows. Catalyzes the strictly specific dephosphorylation of 2'-deoxyribonucleoside 5'-monophosphates. This is 5'-deoxynucleotidase YfbR from Shigella boydii serotype 18 (strain CDC 3083-94 / BS512).